A 336-amino-acid polypeptide reads, in one-letter code: Phosphate acyltransferase (336 aa).

This sequence belongs to the PlsX family. In terms of assembly, homodimer. Probably interacts with PlsY.

It localises to the cytoplasm. It catalyses the reaction a fatty acyl-[ACP] + phosphate = an acyl phosphate + holo-[ACP]. The protein operates within lipid metabolism; phospholipid metabolism. Catalyzes the reversible formation of acyl-phosphate (acyl-PO(4)) from acyl-[acyl-carrier-protein] (acyl-ACP). This enzyme utilizes acyl-ACP as fatty acyl donor, but not acyl-CoA. This Pseudomonas fluorescens (strain Pf0-1) protein is Phosphate acyltransferase.